The primary structure comprises 359 residues: 4-dedimethylamino-4-oxo-anhydrotetracycline transaminase OxyQ (359 aa).

Substrate is bound by residues Gly-32, Lys-92, and Asn-155. Pyridoxal 5'-phosphate contacts are provided by residues 91–92, Asn-155, Tyr-186, and 216–218; these read TK and SLS. An N6-(pyridoxal phosphate)lysine modification is found at Lys-219. Arg-227 serves as a coordination point for pyridoxal 5'-phosphate. Substrate is bound at residue Arg-341.

The protein belongs to the class-I pyridoxal-phosphate-dependent aminotransferase family. Requires pyridoxal 5'-phosphate as cofactor.

It functions in the pathway antibiotic biosynthesis; oxytetracycline biosynthesis. In terms of biological role, involved in the biosynthesis of the tetracycline antibiotic, oxytetracycline. Catalyzes the conversion of 4-dedimethylamino-4-oxoanhydrotetracycline to yield 4-amino-4-de(dimethylamino)anhydrotetracycline (4-amino-ATC). This is 4-dedimethylamino-4-oxo-anhydrotetracycline transaminase OxyQ from Streptomyces rimosus.